A 1898-amino-acid polypeptide reads, in one-letter code: MLLSGGDPPAQEWFMVQTKSKPRVQRQRLQVQRIFRVKLNAFQSRPDTPYFWLQLEGPRENMGKAKEYLKGLCSPELWKEVRYPPILHCAFLGAQGLFLDCLCWSTLAYLVPGPPGSLMVGGLTESFIMTQNWLEELVGRLRWGPAPLLTPRGIWEAEVTRAFGALVWIRGDQHAGDLLQLPPAVQELLLSLVRDAAGKEDIIEWLSRFGISDSHSDPEVLICPPQQQKEAPAMVSVGESPGPFVDMGTLQNRGPENSKRLSSLGATGSLITAQSTPQEAANQLVRVGSNNQDGMDSAQEEGTVQATSSQDSTNHTQALLKQRQVQKIEDKLLFQPPVSALGVCPPWKAWTPGPAFGPLWPGAIAATFWRINELHSLHLAWLLSQACFNFPFWQRPLGPIQLKLPGQNPLPLNLEWKQKELAPLPSAESPAGRPDGGLGGEAALQNCPRPEISPKVTSLLVVPGSSDVKDKVSSDLPQIGPPLTSTPQLQAGGEPGDQGSMQLDFKGLEEGPAPVLPTGQGKPVAQGGLTDQSVPGAQTVPETLKVPMAAAVPKAENPSRTQVPSAAPKLPTSRMMLAVHTEPAAPEVPLAPTKPTAQLMATAQKTVVNQPVLVAQVEPTTPKTPQAQKMPVAKTSPAGPKTPKAQAGPAATVSKAPAASKAPAAPKVPVTPRVSRAPKTPAAQKVPTDAGPTLDVARLLSEVQPTSRASVSLLKGQGQAGRQGPQSSGTLALSSKHQFQMEGLLGAWEGAPRQPPRHLQANSTVTSFQRYHEALNTPFELNLSGEPGNQGLRRVVIDGSSVAMVHGLQHFFSCRGIAMAVQFFWNRGHREVTVFVPTWQLKKNRRVRESHFLTKLHSLKMLSITPSQLENGKKITTYDYRFMVKLAEETDGIIVTNEQIHILMNSSKKLMVKDRLLPFTFAGNLFMVPDDPLGRDGPTLDEFLKKPNRLDTDIGNFLKVWKTLPPSSASVTELSDDADSGPLESLPNMEEVREEKEERQDEEQRQGQGTQKAAEEDDLDSSLASVFRVECPSLSEEILRCLSLHDPPDGALDIDLLPGAASPYLGIPWDGKAPCQQVLAHLAQLTIPSNFTALSFFMGFMDSHRDAIPDYEALVGPLHSLLKQKPDWQWDQEHEEAFLALKRALVSALCLMAPNSQLPFRLEVTVSHVALTAILHQEHSGRKHPIAYTSKPLLPDEESQGPQSGGDSPYAVAWALKHFSRCIGDTPVVLDLSYASRTTADPEVREGRRVSKAWLIRWSLLVQDKGKRALELALLQGLLGENRLLTPAASMPRFFQVLPPFSDLSTFVCIHMSGYCFYREDEWCAGFGLYVLSPTSPPVSLSFSCSPYTPTYAHLAAVACGLERFGQSPLPVVFLTHCNWIFSLLWELLPLWRARGFLSSDGAPLPHPSLLSYIISLTSGLSSLPFIYRTSYRGSLFAVTVDTLAKQGAQGGGQWWSLPKDVPAPTVSPHAMGKRPNLLALQLSDSTLADIIARLQAGQKLSGSSPFSSAFNSLSLDKESGLLMFKGDKKPRVWVVPTQLRRDLIFSVHDIPLGAHQRPEETYKKLRLLGWWPGMQEHVKDYCRSCLFCIPRNLIGSELKVIESPWPLRSTAPWSNLQIEVVGPVTISEEGHKHVLIVADPNTRWVEAFPLKPYTHTAVAQVLLQHVFARWGVPVRLEAAQGPQFARHVLVSCGLALGAQVASLSRDLQFPCLTSSGAYWEFKRALKEFIFLHGKKWAASLPLLHLAFRASSTDATPFKVLTGGESRLTEPLWWEMSSANIEGLKMDVFLLQLVGELLELHWRVADKASEKAENRRFKRESQEKEWNVGDQVLLLSLPRNGSSAKWVGPFYIGDRLSLSLYRIWGFPTPEKLGCIYPSSLMKAFAKSGTPLSFKVLEQ.

5 disordered regions span residues 289–315 (SNNQ…STNH), 424–450 (LPSA…CPRP), 467–533 (DVKD…TDQS), 618–691 (EPTT…TDAG), and 711–731 (VSLL…SGTL). The span at 618 to 627 (EPTTPKTPQA) shows a compositional bias: polar residues. A compositionally biased stretch (low complexity) spans 649 to 672 (PAATVSKAPAASKAPAAPKVPVTP). The RNase NYN domain occupies 792 to 942 (LRRVVIDGSS…LGRDGPTLDE (151 aa)). The segment at 968–1019 (SASVTELSDDADSGPLESLPNMEEVREEKEERQDEEQRQGQGTQKAAEEDDL) is disordered. The segment covering 990-1005 (EEVREEKEERQDEEQR) has biased composition (basic and acidic residues). Residues 1304–1450 (LSTFVCIHMS…VDTLAKQGAQ (147 aa)) enclose the RNase H type-1 domain. The next 2 helical transmembrane spans lie at 1372 to 1392 (VVFL…LPLW) and 1408 to 1428 (PSLL…PFIY). In terms of domain architecture, Integrase catalytic spans 1609 to 1774 (RSTAPWSNLQ…ESRLTEPLWW (166 aa)).

The protein localises to the membrane. In Homo sapiens (Human), this protein is Protein NYNRIN (NYNRIN).